Here is a 398-residue protein sequence, read N- to C-terminus: MTALDRRYDTQIHRRITRTVMVGDVAIGSDHPVVVQSMINEDTLDIDAAVAGIVRLAEAGSEIVRVTTPSMAHARAMGEIRAAVRARGCTVPLVADVHHNGVKIAMEVAQHVDKVRINPGLFVFDKPDPNRQEFSDKEFAAIGARIHETFEPLVTLLRDQNKALRIGVNHGSLAERMLFTYGDTPKGMVESAMEFVRICDELDFHNIVISMKASRAPVMLAAYRLMADTMDKEGFNYPLHLGVTEAGDGDYGRVKSTAGIATLLADGLGDTIRVSLTEAPEREIPVCYSILQSLGLRKTMVEYVACPSCGRTLFNLEEVLHKVRDATSHLTGLDIAVMGCIVNGPGEMADADYGYVGKTPGVISLYRGRDEIRKVPEEEGVNALIQLIKEDGRWVEPA.

[4Fe-4S] cluster contacts are provided by Cys306, Cys309, Cys340, and Glu347.

It belongs to the IspG family. It depends on [4Fe-4S] cluster as a cofactor.

The catalysed reaction is (2E)-4-hydroxy-3-methylbut-2-enyl diphosphate + 2 oxidized [2Fe-2S]-[ferredoxin] + H2O = 2-C-methyl-D-erythritol 2,4-cyclic diphosphate + 2 reduced [2Fe-2S]-[ferredoxin] + H(+). The protein operates within isoprenoid biosynthesis; isopentenyl diphosphate biosynthesis via DXP pathway; isopentenyl diphosphate from 1-deoxy-D-xylulose 5-phosphate: step 5/6. Converts 2C-methyl-D-erythritol 2,4-cyclodiphosphate (ME-2,4cPP) into 1-hydroxy-2-methyl-2-(E)-butenyl 4-diphosphate. The sequence is that of 4-hydroxy-3-methylbut-2-en-1-yl diphosphate synthase (ferredoxin) from Parasynechococcus marenigrum (strain WH8102).